The primary structure comprises 152 residues: D-aminoacyl-tRNA deacylase (152 aa).

Positions 142 to 143 match the Gly-cisPro motif, important for rejection of L-amino acids motif; that stretch reads GP.

This sequence belongs to the DTD family. Homodimer.

The protein resides in the cytoplasm. The catalysed reaction is glycyl-tRNA(Ala) + H2O = tRNA(Ala) + glycine + H(+). It carries out the reaction a D-aminoacyl-tRNA + H2O = a tRNA + a D-alpha-amino acid + H(+). Its function is as follows. An aminoacyl-tRNA editing enzyme that deacylates mischarged D-aminoacyl-tRNAs. Also deacylates mischarged glycyl-tRNA(Ala), protecting cells against glycine mischarging by AlaRS. Acts via tRNA-based rather than protein-based catalysis; rejects L-amino acids rather than detecting D-amino acids in the active site. By recycling D-aminoacyl-tRNA to D-amino acids and free tRNA molecules, this enzyme counteracts the toxicity associated with the formation of D-aminoacyl-tRNA entities in vivo and helps enforce protein L-homochirality. The chain is D-aminoacyl-tRNA deacylase from Burkholderia mallei (strain NCTC 10247).